A 333-amino-acid polypeptide reads, in one-letter code: Ketol-acid reductoisomerase (NADP(+)) (333 aa).

The KARI N-terminal Rossmann domain occupies 2 to 182; it reads AKMYYDSDAS…GCTRAGVLET (181 aa). NADP(+) is bound by residues 25 to 28, R48, S51, and 83 to 86; these read YGSQ and DERQ. H108 is a catalytic residue. G134 contacts NADP(+). Residues 183 to 328 form the KARI C-terminal knotted domain; sequence TFKEETETDL…AELRAMMPFI (146 aa). Residues D191, E195, E227, and E231 each contribute to the Mg(2+) site. S252 is a binding site for substrate.

This sequence belongs to the ketol-acid reductoisomerase family. It depends on Mg(2+) as a cofactor.

The catalysed reaction is (2R)-2,3-dihydroxy-3-methylbutanoate + NADP(+) = (2S)-2-acetolactate + NADPH + H(+). It catalyses the reaction (2R,3R)-2,3-dihydroxy-3-methylpentanoate + NADP(+) = (S)-2-ethyl-2-hydroxy-3-oxobutanoate + NADPH + H(+). Its pathway is amino-acid biosynthesis; L-isoleucine biosynthesis; L-isoleucine from 2-oxobutanoate: step 2/4. It functions in the pathway amino-acid biosynthesis; L-valine biosynthesis; L-valine from pyruvate: step 2/4. Functionally, involved in the biosynthesis of branched-chain amino acids (BCAA). Catalyzes an alkyl-migration followed by a ketol-acid reduction of (S)-2-acetolactate (S2AL) to yield (R)-2,3-dihydroxy-isovalerate. In the isomerase reaction, S2AL is rearranged via a Mg-dependent methyl migration to produce 3-hydroxy-3-methyl-2-ketobutyrate (HMKB). In the reductase reaction, this 2-ketoacid undergoes a metal-dependent reduction by NADPH to yield (R)-2,3-dihydroxy-isovalerate. This chain is Ketol-acid reductoisomerase (NADP(+)), found in Desulfitobacterium hafniense (strain DSM 10664 / DCB-2).